A 324-amino-acid polypeptide reads, in one-letter code: Zinc finger C2HC domain-containing protein 1A (324 aa).

The C2HC/C3H-type 1 zinc finger occupies 15-44 (DLLPCKICGRTFFPLALKKHGPICQKTATK). Cys19, Cys22, His34, and Cys38 together coordinate Zn(2+). Positions 43–83 (TKKRKTFDSSRQRAEGTDIPTVKPLKPRPEPPKKPSNWRRK) are disordered. Over residues 48–58 (TFDSSRQRAEG) the composition is skewed to basic and acidic residues. The segment at 118 to 147 (DYIQCPYCQRRFNENAADRHINFCKEQAAR) adopts a C2HC/C3H-type 2 zinc-finger fold. Cys122, Cys125, His137, and Cys141 together coordinate Zn(2+). Residues 149 to 225 (SNKGKFSTDS…NKPQTLSPSH (77 aa)) are disordered. Positions 176–187 (SNPPGIPSSGSS) are enriched in low complexity. Composition is skewed to polar residues over residues 188 to 198 (RLPQPSTTSKT) and 206 to 223 (KASSVNSPLGNKPQTLSP). Residue Ser222 is modified to Phosphoserine. Thr243 carries the phosphothreonine modification. A Phosphoserine modification is found at Ser291.

The protein belongs to the ZC2HC1 family. The cofactor is Zn(2+).

The protein is Zinc finger C2HC domain-containing protein 1A (Zc2hc1a) of Mus musculus (Mouse).